A 299-amino-acid polypeptide reads, in one-letter code: Arginase (299 aa).

Residues His99, Asp122, His124, and Asp126 each contribute to the Mn(2+) site. Residues 124–128, 135–137, and Asp178 contribute to the substrate site; these read HGDVN and SGN. Positions 226 and 228 each coordinate Mn(2+). Substrate contacts are provided by Thr240 and Glu271.

Belongs to the arginase family. Homohexamer. The cofactor is Mn(2+).

It carries out the reaction L-arginine + H2O = urea + L-ornithine. It participates in nitrogen metabolism; urea cycle; L-ornithine and urea from L-arginine: step 1/1. Functionally, controls arginine catabolism. The chain is Arginase (rocF) from Bacillus caldovelox.